Consider the following 221-residue polypeptide: MDSLATDPAFIDSDVYLRLGLIIEGKRLKKPPTVLSRLSSSLERSLLLNHDDKILLGSPDSVTVFDGRSPPEISIAHYLDRIFKYSCCSPSCFVIAHIYIDHFLHKTRALLKPLNVHRLIITTVMLAAKVFDDRYFNNAYYARVGGVTTRELNRLEMELLFTLDFKLQVDPQTFHTHCCQLEKQNRDGFQIEWPIKEACRANKETWQKRTPDSLCSQTTAR.

This sequence belongs to the cyclin family. Cyclin U/P subfamily. As to quaternary structure, interacts with CDKA-1 and CDKB1-1. In terms of tissue distribution, expressed in roots, stems and flowers. Expressed in the shoot apex, leaf primordia and young leaves.

This Arabidopsis thaliana (Mouse-ear cress) protein is Cyclin-U3-1 (CYCU3-1).